Reading from the N-terminus, the 146-residue chain is Ribonuclease H (146 aa).

One can recognise an RNase H type-1 domain in the interval 1–143 (MKKQVTIYTD…CDQLAREAIK (143 aa)). Mg(2+) is bound by residues Asp10, Glu48, Asp70, and Asp135.

Belongs to the RNase H family. Monomer. The cofactor is Mg(2+).

It is found in the cytoplasm. The enzyme catalyses Endonucleolytic cleavage to 5'-phosphomonoester.. Functionally, endonuclease that specifically degrades the RNA of RNA-DNA hybrids. The chain is Ribonuclease H from Chlorobium chlorochromatii (strain CaD3).